The sequence spans 428 residues: Histidine--tRNA ligase (428 aa).

This sequence belongs to the class-II aminoacyl-tRNA synthetase family. As to quaternary structure, homodimer.

It localises to the cytoplasm. The catalysed reaction is tRNA(His) + L-histidine + ATP = L-histidyl-tRNA(His) + AMP + diphosphate + H(+). The chain is Histidine--tRNA ligase from Bordetella avium (strain 197N).